Reading from the N-terminus, the 686-residue chain is Gamma-aminobutyric acid receptor alpha-like (686 aa).

The N-terminal stretch at 1–58 (MCTMPATRDASGSGDASTDLIAARSLSSHQGQRSNLRIFKLLISCCLLMLCIYPNAWP) is a signal peptide. Residues 97–393 (SSWLTQSNNH…NFHLQRHMGN (297 aa)) are Extracellular-facing. An N-linked (GlcNAc...) asparagine glycan is attached at asparagine 108. Cysteine 233 and cysteine 247 are joined by a disulfide. N-linked (GlcNAc...) asparagine glycosylation is present at asparagine 292. 3 consecutive transmembrane segments (helical) span residues 394 to 414 (FLIQ…VSFW), 424 to 441 (VSLG…GLEA), and 456 to 476 (FFVF…AVVH). At 477 to 650 (YYTKYGSGEC…YNSVSKIDRA (174 aa)) the chain is on the cytoplasmic side. The segment at 570-641 (KPPRADSDED…RRKGKRTPQY (72 aa)) is disordered. Residues 586–596 (QLRANEAPTTS) show a composition bias toward polar residues. Positions 597–609 (AAAAAAQAAAQAA) are enriched in low complexity. A helical membrane pass occupies residues 651–671 (SRIVFPLLFILINVFYWYGYL).

This sequence belongs to the ligand-gated ion channel (TC 1.A.9) family. Gamma-aminobutyric acid receptor (TC 1.A.9.5) subfamily. Generally pentameric. There are five types of GABA(A) receptor chains: alpha, beta, gamma, delta, and rho. Interacts with Lcch3 (beta chain).

The protein resides in the postsynaptic cell membrane. The protein localises to the cell membrane. In terms of biological role, GABA, an inhibitory neurotransmitter, mediates neuronal inhibition by binding to the GABA receptor and opening an integral chloride channel. May combine with the ligand-gated ion channel subunit Lcch3 to form cation-selective GABA-gated ion channels. This chain is Gamma-aminobutyric acid receptor alpha-like (Grd), found in Drosophila melanogaster (Fruit fly).